The sequence spans 637 residues: GTPase-activating protein GYP1 (637 aa).

Residues 1 to 17 (MGVRSAAKEMHERDHNS) are compositionally biased toward basic and acidic residues. 2 disordered regions span residues 1 to 152 (MGVR…GDRY) and 187 to 233 (RTLS…NDSK). Positions 18–27 (DSSSLVTSLM) are enriched in polar residues. Residues 28-45 (KSWRISSASSSKKPSLYK) show a composition bias toward low complexity. Polar residues predominate over residues 46–59 (MNTTESTSLPSGYA). Position 69 is a phosphoserine (Ser69). Polar residues-rich tracts occupy residues 79–91 (QQASTRRTSNSYS) and 98–107 (PTLSTASNES). Residues 115–127 (RQHHQRHHHHQQP) are compositionally biased toward basic residues. Low complexity-rich tracts occupy residues 128 to 142 (RHSSSGSVGNNCSNS) and 187 to 207 (RTLSRKSTSSSINSISNMGTS). The span at 208–223 (AVRNSSSSFTYPQLPQ) shows a compositional bias: polar residues. Ser250 is modified (phosphoserine). The 229-residue stretch at 280 to 508 (GIPKIHRPVV…RMWDTYLSET (229 aa)) folds into the Rab-GAP TBC domain. A disordered region spans residues 543-564 (DFQSPTTALSNMTPNNAVEDSG).

Its subcellular location is the golgi apparatus. The protein localises to the golgi stack. GTPase-activating protein (GAP) that stimulates specifically the intrinsic GTPase activity of Ypt/Rab-type GTPases YPT1 and YPT7. Functions on the Golgi as a negative regulator of YPT1. Functions on the vacuole as a negative regulator of YPT7. It is also active on SEC4 and YPT51. Provides a catalytic arginine (arginine finger) and glutamine (glutamine finger) in trans to accelerate the GTP hydrolysis rate of the substrate GTPase. The protein is GTPase-activating protein GYP1 (GYP1) of Saccharomyces cerevisiae (strain ATCC 204508 / S288c) (Baker's yeast).